The following is a 344-amino-acid chain: Dihydroorotate dehydrogenase (quinone) (344 aa).

Residues 61–65 and T85 each bind FMN; that span reads AGLDK. K65 serves as a coordination point for substrate. A substrate-binding site is contributed by 110-114; it reads NRMGF. Residues N138 and N171 each coordinate FMN. Substrate is bound at residue N171. S174 functions as the Nucleophile in the catalytic mechanism. N176 is a binding site for substrate. Residues K216 and T244 each contribute to the FMN site. A substrate-binding site is contributed by 245–246; it reads NT. FMN-binding positions include G267, G296, and 317–318; that span reads YS.

Belongs to the dihydroorotate dehydrogenase family. Type 2 subfamily. As to quaternary structure, monomer. It depends on FMN as a cofactor.

The protein resides in the cell membrane. The catalysed reaction is (S)-dihydroorotate + a quinone = orotate + a quinol. It functions in the pathway pyrimidine metabolism; UMP biosynthesis via de novo pathway; orotate from (S)-dihydroorotate (quinone route): step 1/1. In terms of biological role, catalyzes the conversion of dihydroorotate to orotate with quinone as electron acceptor. The polypeptide is Dihydroorotate dehydrogenase (quinone) (Psychrobacter sp. (strain PRwf-1)).